The following is a 195-amino-acid chain: Large ribosomal subunit protein bL9 (195 aa).

This sequence belongs to the bacterial ribosomal protein bL9 family.

Binds to the 23S rRNA. In Rhodopseudomonas palustris (strain TIE-1), this protein is Large ribosomal subunit protein bL9.